Reading from the N-terminus, the 565-residue chain is Membrane protein insertase YidC (565 aa).

Helical transmembrane passes span 6 to 26 (VLLI…WGKN), 348 to 368 (LMAL…SLLH), 370 to 390 (WGWA…PLSA), 437 to 457 (GGCF…WVLV), 479 to 499 (PYFI…KLTP), and 516 to 536 (PLIF…YWVI).

This sequence belongs to the OXA1/ALB3/YidC family. Type 1 subfamily. Interacts with the Sec translocase complex via SecD. Specifically interacts with transmembrane segments of nascent integral membrane proteins during membrane integration.

Its subcellular location is the cell inner membrane. In terms of biological role, required for the insertion and/or proper folding and/or complex formation of integral membrane proteins into the membrane. Involved in integration of membrane proteins that insert both dependently and independently of the Sec translocase complex, as well as at least some lipoproteins. Aids folding of multispanning membrane proteins. The polypeptide is Membrane protein insertase YidC (Xylella fastidiosa (strain 9a5c)).